A 161-amino-acid chain; its full sequence is Cytochrome b6-f complex subunit 4 (161 aa).

3 helical membrane passes run 37–57, 96–116, and 132–152; these read LLYI…GLAV, LLGV…PFIE, and TVFL…TFPI.

It belongs to the cytochrome b family. PetD subfamily. As to quaternary structure, the 4 large subunits of the cytochrome b6-f complex are cytochrome b6, subunit IV (17 kDa polypeptide, PetD), cytochrome f and the Rieske protein, while the 4 small subunits are PetG, PetL, PetM and PetN. The complex functions as a dimer.

It localises to the cellular thylakoid membrane. In terms of biological role, component of the cytochrome b6-f complex, which mediates electron transfer between photosystem II (PSII) and photosystem I (PSI), cyclic electron flow around PSI, and state transitions. This is Cytochrome b6-f complex subunit 4 from Cyanothece sp. (strain PCC 7425 / ATCC 29141).